Here is a 437-residue protein sequence, read N- to C-terminus: Ribosomal protein uS12 methylthiotransferase RimO (437 aa).

The 111-residue stretch at P4–P114 folds into the MTTase N-terminal domain. 6 residues coordinate [4Fe-4S] cluster: C13, C49, C78, C145, C149, and C152. The Radical SAM core domain occupies L131 to N369. Residues K372 to V437 form the TRAM domain.

Belongs to the methylthiotransferase family. RimO subfamily. The cofactor is [4Fe-4S] cluster.

Its subcellular location is the cytoplasm. The catalysed reaction is L-aspartate(89)-[ribosomal protein uS12]-hydrogen + (sulfur carrier)-SH + AH2 + 2 S-adenosyl-L-methionine = 3-methylsulfanyl-L-aspartate(89)-[ribosomal protein uS12]-hydrogen + (sulfur carrier)-H + 5'-deoxyadenosine + L-methionine + A + S-adenosyl-L-homocysteine + 2 H(+). Catalyzes the methylthiolation of an aspartic acid residue of ribosomal protein uS12. In Brucella abortus (strain S19), this protein is Ribosomal protein uS12 methylthiotransferase RimO.